Consider the following 475-residue polypeptide: MGSQLIPATAPWDSVPAQEQLFVLITGANSGIGLSIGERLIDEFLATRSLRSHLILIPTTRSKSKSLQTIKALRDYARKAAQTSQALQSRVGSSYRWQDTVARVHVLSLQVDLCDLRGVYAFADALVHGPVSNPEGLEGEYLKNVRIPRLDTVVFNAAYGGWSGVNYPKAIWVILTEGLVQSVTWPSYKMALPTARLNDKANYDYPKEPPLGEVFTACVFGHYVLAHELLPLLCRQSETETPGRLIWSSSLEAIERVLDMSDFQGFKCDGPYESAKRVTDILSLTATLPASLPSSNRFFTPDDPAEARAKPIRPRMYLTHPGIVASTLFPVPWFFMWAYELALLISRWIGSPWHNTDSYTGAKSPVWIALQEQSALDELDAERIKWGSSSNRHMQVEVKKTEVEGWGWEGKVEDAAALNADTAVGVFKKTVGRKRGAVDVTKEDIVKFEELGAESWKNMEDMRHEWENILGVKKA.

Residues Ile32, Ile55, Thr59, and Lys65 each contribute to the NADP(+) site. Catalysis depends on proton donor residues Ser249 and Tyr272. NADP(+)-binding residues include Tyr272, Lys276, Val324, and Ser326. The Lowers pKa of active site Tyr role is filled by Lys276.

It belongs to the short-chain dehydrogenases/reductases (SDR) family. ERG27 subfamily. Heterotetramer of ERG25, ERG26, ERG27 and ERG28. ERG28 acts as a scaffold to tether ERG27 and other 4,4-demethylation-related enzymes, forming a demethylation enzyme complex, in the endoplasmic reticulum.

The protein resides in the endoplasmic reticulum membrane. The protein localises to the lipid droplet. Its pathway is steroid metabolism; ergosterol biosynthesis. Functionally, 3-keto-steroid reductase; part of the third module of ergosterol biosynthesis pathway that includes the late steps of the pathway. ERG27 is a catalytic component of the C-4 demethylation complex that catalyzes the conversion of 4,4-dimethylfecosterol into fecosterol via 4-methylfecosterol. The third module or late pathway involves the ergosterol synthesis itself through consecutive reactions that mainly occur in the endoplasmic reticulum (ER) membrane. Firstly, the squalene synthase ERG9 catalyzes the condensation of 2 farnesyl pyrophosphate moieties to form squalene, which is the precursor of all steroids. Squalene synthase is crucial for balancing the incorporation of farnesyl diphosphate (FPP) into sterol and nonsterol isoprene synthesis. Secondly, squalene is converted into lanosterol by the consecutive action of the squalene epoxidase ERG1 and the lanosterol synthase ERG7. Then, the delta(24)-sterol C-methyltransferase ERG6 methylates lanosterol at C-24 to produce eburicol. Eburicol is the substrate of the sterol 14-alpha demethylase encoded by CYP51A, CYP51B and CYP51C, to yield 4,4,24-trimethyl ergosta-8,14,24(28)-trienol. CYP51B encodes the enzyme primarily responsible for sterol 14-alpha-demethylation, and plays an essential role in ascospore formation. CYP51A encodes an additional sterol 14-alpha-demethylase, induced on ergosterol depletion and responsible for the intrinsic variation in azole sensitivity. The third CYP51 isoform, CYP51C, does not encode a sterol 14-alpha-demethylase, but is required for full virulence on host wheat ears. The C-14 reductase ERG24 then reduces the C14=C15 double bond which leads to 4,4-dimethylfecosterol. A sequence of further demethylations at C-4, involving the C-4 demethylation complex containing the C-4 methylsterol oxidases ERG25, the sterol-4-alpha-carboxylate 3-dehydrogenase ERG26 and the 3-keto-steroid reductase ERG27, leads to the production of fecosterol via 4-methylfecosterol. ERG28 has a role as a scaffold to help anchor ERG25, ERG26 and ERG27 to the endoplasmic reticulum. The C-8 sterol isomerase ERG2 then catalyzes the reaction which results in unsaturation at C-7 in the B ring of sterols and thus converts fecosterol to episterol. The sterol-C5-desaturases ERG3A and ERG3BB then catalyze the introduction of a C-5 double bond in the B ring to produce 5-dehydroepisterol. The C-22 sterol desaturases ERG5A and ERG5B further convert 5-dehydroepisterol into ergosta-5,7,22,24(28)-tetraen-3beta-ol by forming the C-22(23) double bond in the sterol side chain. Finally, ergosta-5,7,22,24(28)-tetraen-3beta-ol is substrate of the C-24(28) sterol reductase ERG4 to produce ergosterol. The sequence is that of 3-keto-steroid reductase ERG27 from Gibberella zeae (strain ATCC MYA-4620 / CBS 123657 / FGSC 9075 / NRRL 31084 / PH-1) (Wheat head blight fungus).